The following is a 366-amino-acid chain: Protein lifeguard 1 (366 aa).

The interval 1-141 is disordered; that stretch reads MSHEKSFLVS…GPPSYYDNQD (141 aa). Composition is skewed to pro residues over residues 14–44 and 67–109; these read YPPPNPGYPGGPQPSMAPYPGAPYPQAPFQP and GPYP…PNPY. 7 helical membrane passes run 160–180, 192–212, 223–243, 248–268, 278–298, 302–322, and 341–361; these read VFLVLTLQLSVTLSTVAVFTF, VWTYYVSYAIFFVSLIVLSCC, LVALSILTVSLSYMVGMIASF, AVIMAVGITTTVCFTVVIFSM, VGVLLVSVVVLILFAILCIFI, VLEIVYASLGALLFTCFLAVD, and FAALNLYTDIINIFLYILTII.

Belongs to the BI1 family. LFG subfamily.

The protein resides in the membrane. Functionally, potential apoptotic regulator. The protein is Protein lifeguard 1 (GRINA) of Bos taurus (Bovine).